An 816-amino-acid polypeptide reads, in one-letter code: MMLLSSSYSGGQFPGVSPLGTRPKRSTTVVPLPVVTRATAGGVRNNLEVVGNAGTLQGMDIDELRVIVRKQLQGVELSPSSYDTAWVAMVPVQGSPQSPCFPQCVEWILQNQQEDGSWGHSAGPSGEVNKDILLSTLACVLALNTWNVGQDHIRRGLSFIGRNFSVAIDGQCAAPVGFNITFSGMLHLAIGMGLKFPVMETDIDSIFRLREVEFERDAGGTASARKAFMAYVSEGLGREQDWDHVMAYQRKNGSLFNSPSTTAASAIHSCNDRALDYLVSLTSKLGGPVPAIHPDKVYSQLCMVDTLEKMGISSDFACDIRDILDMTYSCWMQDEEEIMLDMATCAKAFRLLRMHGYDVSSEGMARFAERSSFDDSIHAYLNDTKPLLELYKSSQLHFLEEDLILENISSWSAKLLKQQLSSNKIMKSLMPEVEYALKYPLYSTVDALEHRGNIERFNVNGFQRPKSGYCGSGADKEILALAVDKFHYNQSVYQQELRYLESWVAEFGLDELKFARVIPLQSLLSALVPLFPAELSDARIAFSQNCMLTTMVDDFFDGGGSMEEMVNFVALIDEWDNHGEIGFCSNNVEIMFNAIYNTTKRNCAKAALVQNRCVMDHIAKQWQVMVRAMKTEAEWAASRHIPATMEEYMSVGEPSFALGPIVPLSAYLLGEELPEEAVRSPEYGQLLRHASAVGRLLNDVMTYEKEVLTWTPNSVLLQALAAARGGGESPTPPSPACAEAARGEVRRAIQASWRDLHRLVFRDDDGSSIVPRACRELFWGTAKVANVFYQEVDGYTPKAMRGMANAVILDPLHLQQ.

The span at 1–10 (MMLLSSSYSG) shows a compositional bias: polar residues. The disordered stretch occupies residues 1 to 24 (MMLLSSSYSGGQFPGVSPLGTRPK). 5 residues coordinate Mg(2+): D553, D557, N698, T702, and E706. The DDXXD motif motif lies at 553–557 (DDFFD).

The protein belongs to the terpene synthase family. Mg(2+) serves as cofactor.

It carries out the reaction 9alpha-copalyl diphosphate = stemod-13(17)-ene + diphosphate. Its function is as follows. Catalyzes the conversion of syn-copalyl diphosphate to stemodene. The polypeptide is Stemod-13(17)-ene synthase (KSL11) (Oryza sativa subsp. indica (Rice)).